A 578-amino-acid polypeptide reads, in one-letter code: MAQISKCSSLSAELNESSIISHHHGNLWADDFIQSLKSSNGAPQYHKRAEKLVEEIKNLVVSEMKDCNDDLIRRLQMVDIFECLGIDRHFQHEIQVALDYVYRYWNELEGIGIGSRDSLIKDFNATALGFRALRLHRYNVSSDVLENFKNENGQFFCSSTVEEKEVRCMLTLFRASEISFPGEKVMDEAKAFTTEYLTKVLTGVDVTDVDQSLLREVKYALEFPWHCSLPRWEARSFIEICGQNDSWLKSIMNKRVLELAKLDFNILQCAHHRELQLLSSWWSQSDIAQQNFYRKRHVEYYLWVVIGTFEPEFSTCRIAFAKIATLMTILDDLYDTHGTLEQLKIFTEGVKRWDLSLVDRLPDYIKITFEFFLNTSNELIAEVAKTQERDMSAYIRKTWERYLEAYLQEAEWIAARHVPTFDEYMKNGISSSGMCILNLYSLLLMGQLLPDDVLEQIHSPSKIHELVELTARLVDDSKDFETKKAGGELASGIECYVKDNPECTLEDASNHLIGLLDLTVKELNWEFVRHDSVALCFKKFAFNVARGLRLIYKYRDGFDVSNQEMKTHIFKILIDPLT.

3 residues coordinate Mg(2+): D331, D335, and D475. The DDXXD motif motif lies at 331-335 (DDLYD).

This sequence belongs to the terpene synthase family. Tpsd subfamily. The cofactor is Mg(2+). It depends on Mn(2+) as a cofactor.

The catalysed reaction is (2E,6E)-farnesyl diphosphate = longifolene + diphosphate. It participates in sesquiterpene biosynthesis. Its pathway is terpene metabolism; oleoresin biosynthesis. Its function is as follows. Terpene synthase (TPS) involved in the biosynthesis of sesquiterpene natural products included in conifer oleoresin secretions and volatile emissions; these compounds contribute to biotic and abiotic stress defense against herbivores and pathogens. Catalyzes the conversion of (2E,6E)-farnesyl diphosphate (FPP) to longifolene. This is Longifolene synthase from Picea engelmannii x Picea glauca (Hybrid white spruce).